We begin with the raw amino-acid sequence, 380 residues long: uncharacterized protein (380 aa).

Disordered stretches follow at residues 278-323 (AATI…PRVA) and 345-368 (SLPG…RPRR). The segment covering 301–319 (RNGPRRPARRGTSRGRRCA) has biased composition (basic residues).

This is an uncharacterized protein from Mycobacterium tuberculosis (strain CDC 1551 / Oshkosh).